The following is a 269-amino-acid chain: MRSAFYISDGTAITSEVFGHALLSLFPTEFEHHTISFIETTEKALAAKERINKATSRGGKPALVFHTFVNNENREIIESCDAVLYNFLEPFVAPLEKELAIKAKPTTHRTHSIHEKSYDYRIEAVNYALTNDDGSNVTNYEEADVILVGVSRSGKTPSSLYLALQYGIKAANYPFTDDDMEELKIPSFLKPFHKKLFGLTIDAQRLIDIRDGRMANSKYSSARQCRMEVREVEKLYKNEQIPFINTTKLSVEEITAKILTETGLQRYKY.

ADP is bound at residue 149–156 (GVSRSGKT).

This sequence belongs to the pyruvate, phosphate/water dikinase regulatory protein family. PSRP subfamily.

It catalyses the reaction [pyruvate, water dikinase] + ADP = [pyruvate, water dikinase]-phosphate + AMP + H(+). It carries out the reaction [pyruvate, water dikinase]-phosphate + phosphate + H(+) = [pyruvate, water dikinase] + diphosphate. Bifunctional serine/threonine kinase and phosphorylase involved in the regulation of the phosphoenolpyruvate synthase (PEPS) by catalyzing its phosphorylation/dephosphorylation. The sequence is that of Putative phosphoenolpyruvate synthase regulatory protein from Colwellia psychrerythraea (strain 34H / ATCC BAA-681) (Vibrio psychroerythus).